Reading from the N-terminus, the 556-residue chain is Oxygen-dependent choline dehydrogenase (556 aa).

Position 4 to 33 (D4 to E33) interacts with FAD. The active-site Proton acceptor is H473.

It belongs to the GMC oxidoreductase family. FAD serves as cofactor.

It localises to the cell membrane. The catalysed reaction is choline + A = betaine aldehyde + AH2. It catalyses the reaction betaine aldehyde + NAD(+) + H2O = glycine betaine + NADH + 2 H(+). It participates in amine and polyamine biosynthesis; betaine biosynthesis via choline pathway; betaine aldehyde from choline (cytochrome c reductase route): step 1/1. Its function is as follows. Involved in the biosynthesis of the osmoprotectant glycine betaine. Catalyzes the oxidation of choline to betaine aldehyde and betaine aldehyde to glycine betaine at the same rate. This chain is Oxygen-dependent choline dehydrogenase, found in Escherichia coli O6:H1 (strain CFT073 / ATCC 700928 / UPEC).